Reading from the N-terminus, the 299-residue chain is Pantothenate synthetase (299 aa).

An ATP-binding site is contributed by 41 to 48; the sequence is MGALHEGH. The active-site Proton donor is H48. Q72 serves as a coordination point for (R)-pantoate. Residue Q72 coordinates beta-alanine. Residue 158–161 coordinates ATP; sequence GQKD. Q164 provides a ligand contact to (R)-pantoate. Residues V187 and 195–198 each bind ATP; that span reads MSSR.

Belongs to the pantothenate synthetase family. As to quaternary structure, homodimer.

The protein resides in the cytoplasm. The enzyme catalyses (R)-pantoate + beta-alanine + ATP = (R)-pantothenate + AMP + diphosphate + H(+). Its pathway is cofactor biosynthesis; (R)-pantothenate biosynthesis; (R)-pantothenate from (R)-pantoate and beta-alanine: step 1/1. Functionally, catalyzes the condensation of pantoate with beta-alanine in an ATP-dependent reaction via a pantoyl-adenylate intermediate. The protein is Pantothenate synthetase of Acidobacterium capsulatum (strain ATCC 51196 / DSM 11244 / BCRC 80197 / JCM 7670 / NBRC 15755 / NCIMB 13165 / 161).